Reading from the N-terminus, the 856-residue chain is Alanine/arginine aminopeptidase (856 aa).

Substrate contacts are provided by residues E132 and 264–268 (GAMEN). H300 is a Zn(2+) binding site. The active-site Proton acceptor is the E301. Residues H304 and E323 each coordinate Zn(2+).

It belongs to the peptidase M1 family. Zn(2+) is required as a cofactor.

Functionally, positive effector of glycogen accumulation. May be involved in nutrient-sensing. This is Alanine/arginine aminopeptidase (AAP1) from Saccharomyces cerevisiae (strain ATCC 204508 / S288c) (Baker's yeast).